A 430-amino-acid chain; its full sequence is Serine--tRNA ligase (430 aa).

Residue Thr237 to Glu239 participates in L-serine binding. Arg268 to Glu270 is an ATP binding site. Glu291 provides a ligand contact to L-serine. Glu355–Ser358 serves as a coordination point for ATP. Ser391 is a binding site for L-serine.

The protein belongs to the class-II aminoacyl-tRNA synthetase family. Type-1 seryl-tRNA synthetase subfamily. Homodimer. The tRNA molecule binds across the dimer.

Its subcellular location is the cytoplasm. The catalysed reaction is tRNA(Ser) + L-serine + ATP = L-seryl-tRNA(Ser) + AMP + diphosphate + H(+). It carries out the reaction tRNA(Sec) + L-serine + ATP = L-seryl-tRNA(Sec) + AMP + diphosphate + H(+). Its pathway is aminoacyl-tRNA biosynthesis; selenocysteinyl-tRNA(Sec) biosynthesis; L-seryl-tRNA(Sec) from L-serine and tRNA(Sec): step 1/1. Catalyzes the attachment of serine to tRNA(Ser). Is also able to aminoacylate tRNA(Sec) with serine, to form the misacylated tRNA L-seryl-tRNA(Sec), which will be further converted into selenocysteinyl-tRNA(Sec). This Escherichia coli O139:H28 (strain E24377A / ETEC) protein is Serine--tRNA ligase.